Consider the following 302-residue polypeptide: 4-hydroxy-tetrahydrodipicolinate synthase (302 aa).

Position 55 (T55) interacts with pyruvate. The active-site Proton donor/acceptor is the Y143. The active-site Schiff-base intermediate with substrate is K171. I213 contacts pyruvate.

It belongs to the DapA family. In terms of assembly, homotetramer; dimer of dimers.

The protein localises to the cytoplasm. It catalyses the reaction L-aspartate 4-semialdehyde + pyruvate = (2S,4S)-4-hydroxy-2,3,4,5-tetrahydrodipicolinate + H2O + H(+). It participates in amino-acid biosynthesis; L-lysine biosynthesis via DAP pathway; (S)-tetrahydrodipicolinate from L-aspartate: step 3/4. Catalyzes the condensation of (S)-aspartate-beta-semialdehyde [(S)-ASA] and pyruvate to 4-hydroxy-tetrahydrodipicolinate (HTPA). This Psychrobacter sp. (strain PRwf-1) protein is 4-hydroxy-tetrahydrodipicolinate synthase.